An 82-amino-acid chain; its full sequence is Consomatin Mao1 (82 aa).

Positions 1–22 (MQTASWVMVMMMVWITAPLSEG) are cleaved as a signal peptide. Residues 23–57 (GKLNDVIRGLVPDDVTPQLILRSLFFHRPSDSVVR) constitute a propeptide that is removed on maturation. Cys-65 and Cys-70 are joined by a disulfide. D-tryptophan is present on Trp-67. Pro-71, Pro-72, and Pro-74 each carry 4-hydroxyproline. Residues 75–82 (WRRPNGKG) constitute a propeptide that is removed on maturation.

It belongs to the conotoxin C superfamily. Consomatin family. Expressed by the venom duct.

It localises to the secreted. In terms of biological role, moderately activates human somatostatin receptors (SSTR) with a preferential activation of SSTR1 and SSTR4. In vivo, does not cause behavioral changes in mice within a few minutes of intracranial injection, but causes a progressive loss of movement thereafter. Four to five hours after injection, mice recover, even with the highest dose tested. Shows antinociception and antihyperalgesia activities in two mouse models of acute pain, most probably by acting outside the central nervous system. This chain is Consomatin Mao1, found in Conus maioensis (Sea snail).